Consider the following 445-residue polypeptide: Phosphoglucosamine mutase (445 aa).

Ser-102 functions as the Phosphoserine intermediate in the catalytic mechanism. Ser-102, Asp-241, Asp-243, and Asp-245 together coordinate Mg(2+). Phosphoserine is present on Ser-102.

This sequence belongs to the phosphohexose mutase family. The cofactor is Mg(2+). Post-translationally, activated by phosphorylation.

The enzyme catalyses alpha-D-glucosamine 1-phosphate = D-glucosamine 6-phosphate. In terms of biological role, catalyzes the conversion of glucosamine-6-phosphate to glucosamine-1-phosphate. This chain is Phosphoglucosamine mutase, found in Shigella flexneri serotype 5b (strain 8401).